The primary structure comprises 146 residues: Probable glycine cleavage system H protein 1, mitochondrial (146 aa).

The transit peptide at 1-30 directs the protein to the mitochondrion; sequence MLKTLRFGTRAFGQNLNIAKRNFCTRYTND. A Lipoyl-binding domain is found at 41 to 123; sequence NYRLGITDFA…MGDGWIVEYK (83 aa). Lysine 82 bears the N6-lipoyllysine mark.

The protein belongs to the GcvH family. In terms of assembly, the glycine cleavage system is composed of four proteins: P, T, L and H. The cofactor is (R)-lipoate.

The protein localises to the mitochondrion. Its function is as follows. The glycine cleavage system catalyzes the degradation of glycine. The H protein shuttles the methylamine group of glycine from the P protein to the T protein. The protein is Probable glycine cleavage system H protein 1, mitochondrial (gcvH1) of Dictyostelium discoideum (Social amoeba).